Here is a 440-residue protein sequence, read N- to C-terminus: Cytochrome P450 monooygenase 1 (440 aa).

Cysteine 381 lines the heme pocket.

The protein belongs to the cytochrome P450 family. Heme serves as cofactor.

It participates in plant hormone biosynthesis; gibberellin biosynthesis. Functionally, GA14 synthase; part of the gene cluster that mediates the biosynthesis of gibberellins (GAs), diterpenoids that may provide a selective advantage during infection of the preferred host plant, rice. Gibberellins (GAs) are diterpenoids and are synthesized via the mevalonate pathway. Biosynthesis of the major metabolite GA3 (gibberellic acid) from geranylgeranyl diphosphate (GGPP) requires 13 steps. The GGPP produced by the geranylgeranyl diphosphate synthase GGS2 is converted to ent-kaurene via ent-copalyldiphosphate in a two-step cyclization reaction performed by the bifunctional ent-copalyl diphosphate synthase/ent-kaurene synthase enzyme (CPS/KS). Ent-Kaurene is metabolized to GAs by a series of oxidation reactions catalyzed by cytochrome P450 monooxygenases. Cytochrome P450 monooxygenase P450-4 is an ent-kaurene oxidase that catalyzes the three oxidation steps between ent-kaurene and ent-kaurenoic acid. The highly multifunctional cytochrome P450 monooxygenase P450-1 then catalyzes four steps involving oxidation at two carbon atoms, in the main pathway from ent-kaurenoic acid to GA14 via GA12-aldehyde as well as producing kaurenolides and fujenoic acids as by-products. The cytochrome P450 monooxygenase P450-2 then converts GA14 to GA4 by removal of C-20. GA4 is further converted to GA7 by the GA4 desaturase DES via 1,2-desaturation before cytochrome P450 monooxygenase P450-3, a 13-hydroxylase, hydroxylates GA7 to GA3, the final product of the GA-biosynthetic pathway. The sequence is that of Cytochrome P450 monooygenase 1 from Gibberella fujikuroi (strain CBS 195.34 / IMI 58289 / NRRL A-6831) (Bakanae and foot rot disease fungus).